The sequence spans 138 residues: Nucleoside diphosphate kinase (138 aa).

The ATP site is built by Lys9, Phe57, Arg85, Thr91, Arg102, and Asn112. His120 (pros-phosphohistidine intermediate) is an active-site residue.

The protein belongs to the NDK family. In terms of assembly, homotetramer. Requires Mg(2+) as cofactor.

The protein localises to the cytoplasm. It catalyses the reaction a 2'-deoxyribonucleoside 5'-diphosphate + ATP = a 2'-deoxyribonucleoside 5'-triphosphate + ADP. The enzyme catalyses a ribonucleoside 5'-diphosphate + ATP = a ribonucleoside 5'-triphosphate + ADP. Major role in the synthesis of nucleoside triphosphates other than ATP. The ATP gamma phosphate is transferred to the NDP beta phosphate via a ping-pong mechanism, using a phosphorylated active-site intermediate. The protein is Nucleoside diphosphate kinase of Streptococcus agalactiae serotype V (strain ATCC BAA-611 / 2603 V/R).